The primary structure comprises 490 residues: Betaine aldehyde dehydrogenase (490 aa).

Residue D93 participates in K(+) binding. 150 to 152 provides a ligand contact to NAD(+); it reads GAW. K162 functions as the Charge relay system in the catalytic mechanism. 176–179 contacts NAD(+); it reads KPSE. Residue V180 participates in K(+) binding. 230–233 contacts NAD(+); sequence GIAS. L246 serves as a coordination point for K(+). E252 (proton acceptor) is an active-site residue. NAD(+) is bound by residues G254, C286, and E387. Catalysis depends on C286, which acts as the Nucleophile. At C286 the chain carries Cysteine sulfenic acid (-SOH). Residues K457 and G460 each contribute to the K(+) site. The active-site Charge relay system is E464.

Belongs to the aldehyde dehydrogenase family. Dimer of dimers. K(+) serves as cofactor.

It carries out the reaction betaine aldehyde + NAD(+) + H2O = glycine betaine + NADH + 2 H(+). The protein operates within amine and polyamine biosynthesis; betaine biosynthesis via choline pathway; betaine from betaine aldehyde: step 1/1. In terms of biological role, involved in the biosynthesis of the osmoprotectant glycine betaine. Catalyzes the irreversible oxidation of betaine aldehyde to the corresponding acid. The polypeptide is Betaine aldehyde dehydrogenase (Yersinia pseudotuberculosis serotype O:1b (strain IP 31758)).